The primary structure comprises 128 residues: Azurin (128 aa).

Residues 1–128 enclose the Plastocyanin-like domain; sequence AECSVDIQGN…AMMKGTLTLK (128 aa). Positions 46, 112, 117, and 121 each coordinate Cu cation.

The protein resides in the periplasm. Its function is as follows. Transfers electrons from cytochrome c551 to cytochrome oxidase. This chain is Azurin, found in Pseudomonas denitrificans.